The sequence spans 242 residues: Mannose-P-dolichol utilization defect 1 protein homolog (242 aa).

One can recognise a PQ-loop 1 domain in the interval 37-95 (LSRGLGFAITLGSILLFVPQILKIQAARSAQGISAASQLLALVGAIGTASYSYRSGFVF). 7 helical membrane passes run 40–60 (GLGF…ILKI), 68–88 (GISA…ASYS), 98–118 (WGDS…IFLF), 120–140 (GQTM…YGVV), 148–168 (TLTA…LLQI), 180–200 (LSLI…FTSV), and 207–227 (LLIV…AQFF). Residues 152–202 (VQTAGIPIVVVSKLLQISQNYRAQSTGQLSLISVFLQFAGTLARVFTSVQD) enclose the PQ-loop 2 domain.

The protein belongs to the MPDU1 (TC 2.A.43.3) family.

The protein resides in the membrane. This Caenorhabditis elegans protein is Mannose-P-dolichol utilization defect 1 protein homolog.